Here is a 264-residue protein sequence, read N- to C-terminus: S-adenosylmethionine decarboxylase proenzyme (264 aa).

S112 (schiff-base intermediate with substrate; via pyruvic acid) is an active-site residue. S112 bears the Pyruvic acid (Ser); by autocatalysis mark. The active-site Proton acceptor; for processing activity is H117. Catalysis depends on C140, which acts as the Proton donor; for catalytic activity.

It belongs to the prokaryotic AdoMetDC family. Type 2 subfamily. In terms of assembly, heterooctamer of four alpha and four beta chains arranged as a tetramer of alpha/beta heterodimers. The cofactor is pyruvate. Post-translationally, is synthesized initially as an inactive proenzyme. Formation of the active enzyme involves a self-maturation process in which the active site pyruvoyl group is generated from an internal serine residue via an autocatalytic post-translational modification. Two non-identical subunits are generated from the proenzyme in this reaction, and the pyruvate is formed at the N-terminus of the alpha chain, which is derived from the carboxyl end of the proenzyme. The post-translation cleavage follows an unusual pathway, termed non-hydrolytic serinolysis, in which the side chain hydroxyl group of the serine supplies its oxygen atom to form the C-terminus of the beta chain, while the remainder of the serine residue undergoes an oxidative deamination to produce ammonia and the pyruvoyl group blocking the N-terminus of the alpha chain.

The enzyme catalyses S-adenosyl-L-methionine + H(+) = S-adenosyl 3-(methylsulfanyl)propylamine + CO2. Its pathway is amine and polyamine biosynthesis; S-adenosylmethioninamine biosynthesis; S-adenosylmethioninamine from S-adenosyl-L-methionine: step 1/1. Catalyzes the decarboxylation of S-adenosylmethionine to S-adenosylmethioninamine (dcAdoMet), the propylamine donor required for the synthesis of the polyamines spermine and spermidine from the diamine putrescine. The protein is S-adenosylmethionine decarboxylase proenzyme of Enterobacter sp. (strain 638).